A 355-amino-acid chain; its full sequence is Beta-1,2-mannobiose phosphorylase (355 aa).

Residues N31, R46, R89, 140 to 141 (ED), K188, Y273, and D333 each bind beta-D-Manp-(1-&gt;2)-beta-D-Manp-(1-&gt;2)-D-Manp.

The protein belongs to the glycosyl hydrolase 130 family. Homodimer.

It catalyses the reaction beta-D-mannopyranosyl-(1-&gt;2)-D-mannopyranose + phosphate = alpha-D-mannose 1-phosphate + D-mannose. Its function is as follows. Catalyzes the reversible phosphorolysis of 1,2-beta-oligomannan. In phosphorolytic reactions, prefers beta-1,2-mannobiose (beta-1,2-Man2) as substrate, but can also use beta-1,2-mannotriose. This Listeria innocua serovar 6a (strain ATCC BAA-680 / CLIP 11262) protein is Beta-1,2-mannobiose phosphorylase.